The primary structure comprises 329 residues: Protoheme IX farnesyltransferase (329 aa).

Helical transmembrane passes span 61–81, 108–128, 130–150, 158–178, 186–206, 243–263, and 284–304; these read LACT…LNCL, AFLI…AGVN, LAAG…TIVL, IVIG…AATG, WLFG…ALLL, LLGV…VLPF, and AKGL…LLLL.

This sequence belongs to the UbiA prenyltransferase family. Protoheme IX farnesyltransferase subfamily.

The protein resides in the cell inner membrane. It carries out the reaction heme b + (2E,6E)-farnesyl diphosphate + H2O = Fe(II)-heme o + diphosphate. The protein operates within porphyrin-containing compound metabolism; heme O biosynthesis; heme O from protoheme: step 1/1. Converts heme B (protoheme IX) to heme O by substitution of the vinyl group on carbon 2 of heme B porphyrin ring with a hydroxyethyl farnesyl side group. The polypeptide is Protoheme IX farnesyltransferase (Synechococcus sp. (strain RCC307)).